The sequence spans 746 residues: NAD(P)H-quinone oxidoreductase subunit 5, chloroplastic (746 aa).

Helical transmembrane passes span 9 to 29, 40 to 60, 89 to 109, 125 to 145, 147 to 167, 185 to 205, 221 to 241, 258 to 278, 280 to 300, 327 to 347, 354 to 374, 396 to 416, 425 to 445, 547 to 567, 608 to 628, and 723 to 743; these read WIIPFIPLPVPILLGVGLLLF, WTFLSIFLLSIVMIFSLYLSI, IDPLTSIMSILITTVGILVLI, FAYMGFFNTSMLGLVTSSNLI, VYFFWELVGMCSYLLIGFWFT, GDFGLLLGILGLYWITGSFEF, VNLLFLTLCAFLLFVGPIAKS, TPISALIHAATMVAAGIFLVA, LLPLFIVIPSIMYIISLIGII, LGYMMLALGMGSYRSALFHLI, ALLFLGSGSIIHSMEAIVGYS, TAFLIGTLSLCGIPPLACFWS, LLFSPIFAIIACSTAGLTAFY, ILFPMLILLLFTLFIGAIGIP, FSVSIAFFGIFIAYCLYKPFY, and YLFLYLSYVLIFLMILLFFYF.

It belongs to the complex I subunit 5 family. In terms of assembly, NDH is composed of at least 16 different subunits, 5 of which are encoded in the nucleus.

It localises to the plastid. Its subcellular location is the chloroplast thylakoid membrane. It carries out the reaction a plastoquinone + NADH + (n+1) H(+)(in) = a plastoquinol + NAD(+) + n H(+)(out). It catalyses the reaction a plastoquinone + NADPH + (n+1) H(+)(in) = a plastoquinol + NADP(+) + n H(+)(out). In terms of biological role, NDH shuttles electrons from NAD(P)H:plastoquinone, via FMN and iron-sulfur (Fe-S) centers, to quinones in the photosynthetic chain and possibly in a chloroplast respiratory chain. The immediate electron acceptor for the enzyme in this species is believed to be plastoquinone. Couples the redox reaction to proton translocation, and thus conserves the redox energy in a proton gradient. The polypeptide is NAD(P)H-quinone oxidoreductase subunit 5, chloroplastic (ndhF) (Olimarabidopsis pumila (Dwarf rocket)).